The chain runs to 321 residues: MTSKLDQLREITTVVADTGDIEAVARLKPVDCTTNPSIVLKALGTPMFADAIKEAVAWGKKQGGNPDAVSSAVADRLAISVGAALVKLVPGRVSTEVDADLSFDTEASLAKARSIIAAYKDRGIDRDRILIKLASTWEGIRAAEVLQKEGIDCNLTLLFSKAQAIACADAKVFLISPFVGRILDWYKKSTGKDYTAEEDPGVISVREIYNYYKANDIKTIVMGASFRNAGEIEALAGCDRLTISPALLDELSKDDGKLERKLSPESRKPDAKVSVDEKTFRWMMNEDAMATEKLAEGIRAFAKDLTTLRTMVQKELQLAAA.

K132 acts as the Schiff-base intermediate with substrate in catalysis.

This sequence belongs to the transaldolase family. Type 1 subfamily. As to quaternary structure, homodimer.

It localises to the cytoplasm. It catalyses the reaction D-sedoheptulose 7-phosphate + D-glyceraldehyde 3-phosphate = D-erythrose 4-phosphate + beta-D-fructose 6-phosphate. It participates in carbohydrate degradation; pentose phosphate pathway; D-glyceraldehyde 3-phosphate and beta-D-fructose 6-phosphate from D-ribose 5-phosphate and D-xylulose 5-phosphate (non-oxidative stage): step 2/3. Transaldolase is important for the balance of metabolites in the pentose-phosphate pathway. The polypeptide is Transaldolase (Rhizobium etli (strain ATCC 51251 / DSM 11541 / JCM 21823 / NBRC 15573 / CFN 42)).